A 476-amino-acid chain; its full sequence is ATP synthase subunit beta (476 aa).

162–169 lines the ATP pocket; it reads GGAGVGKT.

The protein belongs to the ATPase alpha/beta chains family. In terms of assembly, F-type ATPases have 2 components, CF(1) - the catalytic core - and CF(0) - the membrane proton channel. CF(1) has five subunits: alpha(3), beta(3), gamma(1), delta(1), epsilon(1). CF(0) has three main subunits: a(1), b(2) and c(9-12). The alpha and beta chains form an alternating ring which encloses part of the gamma chain. CF(1) is attached to CF(0) by a central stalk formed by the gamma and epsilon chains, while a peripheral stalk is formed by the delta and b chains.

The protein resides in the cell membrane. It catalyses the reaction ATP + H2O + 4 H(+)(in) = ADP + phosphate + 5 H(+)(out). Its function is as follows. Produces ATP from ADP in the presence of a proton gradient across the membrane. The catalytic sites are hosted primarily by the beta subunits. The polypeptide is ATP synthase subunit beta (Mycoplasma capricolum subsp. capricolum (strain California kid / ATCC 27343 / NCTC 10154)).